The following is a 428-amino-acid chain: MNILIIGNGGREHALGWKAAQSPLADKIYVAPGNAGTALEPTLENVDIAATDIAGLLAFAQSHDIGLTIVGPEAPLVIGVVDAFRAAGLAIFGPTQAAAQLEGSKAFTKDFLARHNIPSAEYQNFTDVEAALAYVRQKGAPIVIKADGLAAGKGVIVAMTQEEAETAVNDMLAGNAFGDAGHRIVVEEFLDGEEASFIVMVDGENVLPMATSQDHKRVGDGDTGPNTGGMGAYSPAPVVTDDVHQRVMDQVIWPTVRGMAAEGNIYTGFLYAGLMISADGQPKVIEFNCRFGDPETQPIMLRMRSDLVELCLAGTQGKLNEKTSDWDERPSLGVVLAAGGYPADYRQGDVIHGLPQQEVKDGKVFHAGTKLNGNHEVVTNGGRVLCVTALGETVAQAQQYAYQLAEGIQWEGVFCRKDIGYRAIARGK.

The region spanning 109–316 is the ATP-grasp domain; sequence KDFLARHNIP…LVELCLAGTQ (208 aa). 135 to 196 contacts ATP; it reads VRQKGAPIVI…EEFLDGEEAS (62 aa). Residues E286 and N288 each coordinate Mg(2+).

This sequence belongs to the GARS family. It depends on Mg(2+) as a cofactor. The cofactor is Mn(2+).

The enzyme catalyses 5-phospho-beta-D-ribosylamine + glycine + ATP = N(1)-(5-phospho-beta-D-ribosyl)glycinamide + ADP + phosphate + H(+). The protein operates within purine metabolism; IMP biosynthesis via de novo pathway; N(1)-(5-phospho-D-ribosyl)glycinamide from 5-phospho-alpha-D-ribose 1-diphosphate: step 2/2. The polypeptide is Phosphoribosylamine--glycine ligase (Yersinia pestis).